The chain runs to 556 residues: Arginine--tRNA ligase 1 (556 aa).

The short motif at 132 to 142 (ANPTGNLHLGH) is the 'HIGH' region element.

It belongs to the class-I aminoacyl-tRNA synthetase family. Monomer.

Its subcellular location is the cytoplasm. The catalysed reaction is tRNA(Arg) + L-arginine + ATP = L-arginyl-tRNA(Arg) + AMP + diphosphate. This chain is Arginine--tRNA ligase 1 (argS1), found in Halalkalibacterium halodurans (strain ATCC BAA-125 / DSM 18197 / FERM 7344 / JCM 9153 / C-125) (Bacillus halodurans).